Here is a 373-residue protein sequence, read N- to C-terminus: XK-related protein 9 (373 aa).

The next 8 membrane-spanning stretches (helical) occupy residues 8 to 28 (FMMS…DIWV), 38 to 58 (YVFS…AQCF), 166 to 186 (AAIM…QVAL), 203 to 223 (ITYL…VVLL), 224 to 244 (LFLN…LGII), 256 to 276 (CISM…FTFF), 295 to 315 (VLGT…IFNP), and 318 to 338 (FIPI…FLIV).

Belongs to the XK family. Undergoes proteolytic processing by caspase-3 (CASP3), caspase-6 (CASP6) and caspase-7 (CASP7) to generate the XK-related protein 9, processed form, leading to its activation.

It is found in the cell membrane. The enzyme catalyses a 1,2-diacyl-sn-glycero-3-phospho-L-serine(in) = a 1,2-diacyl-sn-glycero-3-phospho-L-serine(out). Activated upon caspase cleavage to generate the XK-related protein 9, processed form. Does not act prior the onset of apoptosis. Functionally, phospholipid scramblase that promotes phosphatidylserine exposure on apoptotic cell surface. Phosphatidylserine is a specific marker only present at the surface of apoptotic cells and acts as a specific signal for engulfment. This Homo sapiens (Human) protein is XK-related protein 9.